The sequence spans 508 residues: MDGNAKGGGHSEALKNYNLGRTLGIGSFGKVKIAEHKLTGHRVAIKILNRRQMRNMEMEEKAKREIKILRLFIHPHIIRLYEVIYTPTDIYVVMEYCKFGELFDYIVEKGRLQEDEARRIFQQIISGVEYCHRNMVVHRDLKPENLLLDSKYNVKLADFGLSNVMHDGHFLKTSCGSPNYAAPEVISGKLYAGPEVDVWSCGVILYALLCGTLPFDDENIPNLFKKIKGGIYTLPSHLSALARDLIPRMLVVDPMKRITIREIREHQWFQIRLPRYLAVPPPDTAQQAKMIDEDTLQDVVNLGYGKDHVCESLRNRLQNEATVAYYLLLDNRFRATSGYLGADYQESLERNFNRFASSESASSNTRHYLPGSSDPHASGLRPHYPVERKWALGLQSRAQPREIMIEVLKALQDLNVSWKKNGQYNMKCRWSVGTQATDMLDVNNSFVDDSIIMDNGDVNGRLPAVIKFEIQLYKTRDEKYLLDMQRVTGPQLLFLDFCADFLTKLRVL.

One can recognise a Protein kinase domain in the interval tyrosine 17–phenylalanine 269. ATP is bound by residues leucine 23–valine 31 and lysine 46. Aspartate 140 acts as the Proton acceptor in catalysis. The UBA domain occupies methionine 290–aspartate 330. The region spanning asparagine 459–valine 507 is the KA1 domain.

The protein belongs to the protein kinase superfamily. Ser/Thr protein kinase family. In terms of assembly, interacts with HDR1. In terms of tissue distribution, strongly expressed in immature seeds. Mostly expressed in panicles, and to a lower extent, in leaf sheaths.

It is found in the nucleus. The catalysed reaction is L-seryl-[protein] + ATP = O-phospho-L-seryl-[protein] + ADP + H(+). The enzyme catalyses L-threonyl-[protein] + ATP = O-phospho-L-threonyl-[protein] + ADP + H(+). This Oryza sativa subsp. indica (Rice) protein is Serine/threonine protein kinase OSK3.